The sequence spans 364 residues: Methylthioribose-1-phosphate isomerase (364 aa).

Substrate-binding positions include 49-51 (RGA), arginine 89, and glutamine 201. Aspartate 242 serves as the catalytic Proton donor. 252–253 (NK) is a substrate binding site.

It belongs to the eIF-2B alpha/beta/delta subunits family. MtnA subfamily.

It catalyses the reaction 5-(methylsulfanyl)-alpha-D-ribose 1-phosphate = 5-(methylsulfanyl)-D-ribulose 1-phosphate. It participates in amino-acid biosynthesis; L-methionine biosynthesis via salvage pathway; L-methionine from S-methyl-5-thio-alpha-D-ribose 1-phosphate: step 1/6. Its function is as follows. Catalyzes the interconversion of methylthioribose-1-phosphate (MTR-1-P) into methylthioribulose-1-phosphate (MTRu-1-P). The protein is Methylthioribose-1-phosphate isomerase of Leptospira interrogans serogroup Icterohaemorrhagiae serovar Lai (strain 56601).